We begin with the raw amino-acid sequence, 509 residues long: Galactose-1-phosphate uridylyltransferase (509 aa).

It belongs to the galactose-1-phosphate uridylyltransferase type 2 family.

It is found in the cytoplasm. It catalyses the reaction alpha-D-galactose 1-phosphate + UDP-alpha-D-glucose = alpha-D-glucose 1-phosphate + UDP-alpha-D-galactose. The protein operates within carbohydrate metabolism; galactose metabolism. In Fusobacterium nucleatum subsp. nucleatum (strain ATCC 25586 / DSM 15643 / BCRC 10681 / CIP 101130 / JCM 8532 / KCTC 2640 / LMG 13131 / VPI 4355), this protein is Galactose-1-phosphate uridylyltransferase.